The primary structure comprises 88 residues: Exodeoxyribonuclease 7 small subunit (88 aa).

It belongs to the XseB family. As to quaternary structure, heterooligomer composed of large and small subunits.

It localises to the cytoplasm. The enzyme catalyses Exonucleolytic cleavage in either 5'- to 3'- or 3'- to 5'-direction to yield nucleoside 5'-phosphates.. Bidirectionally degrades single-stranded DNA into large acid-insoluble oligonucleotides, which are then degraded further into small acid-soluble oligonucleotides. The polypeptide is Exodeoxyribonuclease 7 small subunit (Bordetella petrii (strain ATCC BAA-461 / DSM 12804 / CCUG 43448)).